Consider the following 168-residue polypeptide: Large ribosomal subunit protein uL10 (168 aa).

This sequence belongs to the universal ribosomal protein uL10 family. Part of the ribosomal stalk of the 50S ribosomal subunit. The N-terminus interacts with L11 and the large rRNA to form the base of the stalk. The C-terminus forms an elongated spine to which L12 dimers bind in a sequential fashion forming a multimeric L10(L12)X complex.

Functionally, forms part of the ribosomal stalk, playing a central role in the interaction of the ribosome with GTP-bound translation factors. This Acinetobacter baumannii (strain AB307-0294) protein is Large ribosomal subunit protein uL10.